We begin with the raw amino-acid sequence, 116 residues long: Mitochondrial import inner membrane translocase subunit PAM16 like 2 (116 aa).

Residues 1-27 (MAGRLLANLIVMGSGIIGRAVFQAYRQ) constitute a mitochondrion transit peptide. A J-like region spans residues 57 to 106 (EARQILGVTEKTSWEEILQKYDKLFENNAKAGSFYLQSKVHRAKECLEVV).

The protein belongs to the TIM16/PAM16 family. As to expression, expressed constitutively and ubiquitously, except in root tips, at low levels.

Its subcellular location is the mitochondrion inner membrane. The protein resides in the cytoplasm. Regulates ATP-dependent protein translocation into the mitochondrial matrix. Involved in the uptake of thaxtomin, a phytotoxin produced by Streptomyces bacteria, that causes dramatic cell swelling, reduced seedling growth, and inhibition of cellulose synthesis. Modulates polar auxin transport. Involved in importing a negative regulator of plant immunity into mitochondria, thus protecting plants from over-accumulation of reactive oxygen species (ROS) and preventing autoimmunity. Confers sensitivity to virulent pathogens such as the oomycete H.arabidopsidis Noco2 and the bacteria P.syringae pv. maculicola ES4326. This Arabidopsis thaliana (Mouse-ear cress) protein is Mitochondrial import inner membrane translocase subunit PAM16 like 2.